The chain runs to 425 residues: Gamma-glutamyl phosphate reductase (425 aa).

Belongs to the gamma-glutamyl phosphate reductase family.

It is found in the cytoplasm. It catalyses the reaction L-glutamate 5-semialdehyde + phosphate + NADP(+) = L-glutamyl 5-phosphate + NADPH + H(+). It functions in the pathway amino-acid biosynthesis; L-proline biosynthesis; L-glutamate 5-semialdehyde from L-glutamate: step 2/2. Functionally, catalyzes the NADPH-dependent reduction of L-glutamate 5-phosphate into L-glutamate 5-semialdehyde and phosphate. The product spontaneously undergoes cyclization to form 1-pyrroline-5-carboxylate. The sequence is that of Gamma-glutamyl phosphate reductase from Aromatoleum aromaticum (strain DSM 19018 / LMG 30748 / EbN1) (Azoarcus sp. (strain EbN1)).